Consider the following 398-residue polypeptide: Trans-2-enoyl-CoA reductase [NADH] (398 aa).

NAD(+) is bound by residues 47-52 (GASSGF), 74-75 (YE), 111-112 (DA), and 139-140 (LA). Y225 lines the substrate pocket. The Proton donor role is filled by Y235. NAD(+) contacts are provided by residues K244 and 274 to 276 (LVT).

The protein belongs to the TER reductase family. As to quaternary structure, monomer.

The catalysed reaction is a 2,3-saturated acyl-CoA + NAD(+) = a (2E)-enoyl-CoA + NADH + H(+). It participates in lipid metabolism; fatty acid biosynthesis. Its function is as follows. Involved in the fatty acid synthesis (FAS II). Catalyzes the reduction of the carbon-carbon double bond of crotonyl-CoA to yield butyryl-CoA. The protein is Trans-2-enoyl-CoA reductase [NADH] of Clostridium acetobutylicum (strain ATCC 824 / DSM 792 / JCM 1419 / IAM 19013 / LMG 5710 / NBRC 13948 / NRRL B-527 / VKM B-1787 / 2291 / W).